Consider the following 224-residue polypeptide: Ribonuclease HII (224 aa).

The region spanning 17 to 201 (GTVIGVDEAG…VLSNLSVKKV (185 aa)) is the RNase H type-2 domain. Positions 23, 24, and 111 each coordinate a divalent metal cation.

This sequence belongs to the RNase HII family. Mn(2+) is required as a cofactor. Requires Mg(2+) as cofactor.

The protein resides in the cytoplasm. The catalysed reaction is Endonucleolytic cleavage to 5'-phosphomonoester.. Endonuclease that specifically degrades the RNA of RNA-DNA hybrids. This Pseudothermotoga lettingae (strain ATCC BAA-301 / DSM 14385 / NBRC 107922 / TMO) (Thermotoga lettingae) protein is Ribonuclease HII.